The following is a 170-amino-acid chain: Adenine phosphoribosyltransferase (170 aa).

This sequence belongs to the purine/pyrimidine phosphoribosyltransferase family. In terms of assembly, homodimer.

The protein resides in the cytoplasm. It carries out the reaction AMP + diphosphate = 5-phospho-alpha-D-ribose 1-diphosphate + adenine. It participates in purine metabolism; AMP biosynthesis via salvage pathway; AMP from adenine: step 1/1. Catalyzes a salvage reaction resulting in the formation of AMP, that is energically less costly than de novo synthesis. This chain is Adenine phosphoribosyltransferase, found in Geobacillus thermodenitrificans (strain NG80-2).